The chain runs to 70 residues: DNA-directed RNA polymerase subunit omega (70 aa).

It belongs to the RNA polymerase subunit omega family. The RNAP catalytic core consists of 2 alpha, 1 beta, 1 beta' and 1 omega subunit. When a sigma factor is associated with the core the holoenzyme is formed, which can initiate transcription.

It catalyses the reaction RNA(n) + a ribonucleoside 5'-triphosphate = RNA(n+1) + diphosphate. Functionally, promotes RNA polymerase assembly. Latches the N- and C-terminal regions of the beta' subunit thereby facilitating its interaction with the beta and alpha subunits. In Bacillus cereus (strain B4264), this protein is DNA-directed RNA polymerase subunit omega.